The chain runs to 139 residues: Large ribosomal subunit protein uL16 (139 aa).

The span at 1-16 shows a compositional bias: basic residues; the sequence is MLIPRRVKHRKQHHPG. The segment at 1 to 25 is disordered; that stretch reads MLIPRRVKHRKQHHPGRSGQATGGT.

It belongs to the universal ribosomal protein uL16 family. In terms of assembly, part of the 50S ribosomal subunit.

In terms of biological role, binds 23S rRNA and is also seen to make contacts with the A and possibly P site tRNAs. The polypeptide is Large ribosomal subunit protein uL16 (Leifsonia xyli subsp. xyli (strain CTCB07)).